The primary structure comprises 452 residues: Phosphoglucosamine mutase (452 aa).

The Phosphoserine intermediate role is filled by Ser-105. Positions 105, 244, 246, and 248 each coordinate Mg(2+). Residue Ser-105 is modified to Phosphoserine.

Belongs to the phosphohexose mutase family. Mg(2+) serves as cofactor. Post-translationally, activated by phosphorylation.

It catalyses the reaction alpha-D-glucosamine 1-phosphate = D-glucosamine 6-phosphate. Catalyzes the conversion of glucosamine-6-phosphate to glucosamine-1-phosphate. The protein is Phosphoglucosamine mutase of Blochmanniella floridana.